We begin with the raw amino-acid sequence, 224 residues long: Heme response regulator HssR (224 aa).

The Response regulatory domain occupies 3–116 (NCLIVDDDKK…ELLFRIKAVL (114 aa)). Residue aspartate 52 is modified to 4-aspartylphosphate. A DNA-binding region (ompR/PhoB-type) is located at residues 124–222 (DNELQLGNLI…VRGQGYRVDQ (99 aa)).

In terms of processing, phosphorylated by HssS.

Its subcellular location is the cytoplasm. Its function is as follows. Member of the two-component regulatory system HssS/HssR involved in intracellular heme homeostasis and tempering of staphylococcal virulence. Phosphorylated HssR binds to a direct repeat sequence within hrtAB promoter and activates the expression of hrtAB, an efflux pump, in response to extracellular heme, hemin, hemoglobin or blood. The sequence is that of Heme response regulator HssR (hssR) from Staphylococcus epidermidis (strain ATCC 12228 / FDA PCI 1200).